Here is a 410-residue protein sequence, read N- to C-terminus: Multidrug resistance protein MdtA (410 aa).

The first 21 residues, 1 to 21 (MNNRYPVMKKGLIVLVVIAVA), serve as a signal peptide directing secretion. Positions 36 to 56 (SDGDLSGQSAHGKRGNGAHKP) are disordered.

It belongs to the membrane fusion protein (MFP) (TC 8.A.1) family. Part of a tripartite efflux system composed of MdtA, MdtB and MdtC.

The protein resides in the cell inner membrane. This Pantoea ananatis (strain AJ13355) protein is Multidrug resistance protein MdtA.